We begin with the raw amino-acid sequence, 103 residues long: Large ribosomal subunit protein uL24 (103 aa).

Belongs to the universal ribosomal protein uL24 family. In terms of assembly, part of the 50S ribosomal subunit.

In terms of biological role, one of two assembly initiator proteins, it binds directly to the 5'-end of the 23S rRNA, where it nucleates assembly of the 50S subunit. Functionally, one of the proteins that surrounds the polypeptide exit tunnel on the outside of the subunit. The polypeptide is Large ribosomal subunit protein uL24 (Latilactobacillus sakei subsp. sakei (strain 23K) (Lactobacillus sakei subsp. sakei)).